Here is a 299-residue protein sequence, read N- to C-terminus: Homoserine kinase (299 aa).

Position 84–94 (84–94) interacts with ATP; sequence PISRGLGSSSA.

This sequence belongs to the GHMP kinase family. Homoserine kinase subfamily.

Its subcellular location is the cytoplasm. It catalyses the reaction L-homoserine + ATP = O-phospho-L-homoserine + ADP + H(+). It functions in the pathway amino-acid biosynthesis; L-threonine biosynthesis; L-threonine from L-aspartate: step 4/5. Catalyzes the ATP-dependent phosphorylation of L-homoserine to L-homoserine phosphate. The polypeptide is Homoserine kinase (Helicobacter hepaticus (strain ATCC 51449 / 3B1)).